The chain runs to 932 residues: Myelin gene regulatory factor-like A (932 aa).

Composition is skewed to low complexity over residues 1 to 19 (MDGY…QQHQ) and 33 to 48 (QQQQ…QQQQ). 7 disordered regions span residues 1-63 (MDGY…ISNG), 152-256 (VNSP…LSSS), 269-328 (TNTQ…NENP), 540-568 (VTPP…SNNM), 582-601 (TMNI…LSQL), 613-660 (TQNH…NNNN), and 680-726 (NINN…CHWN). Residues 49–59 (PMNGSNNQLLG) are compositionally biased toward polar residues. Residues 127–154 (LDSSFLMLQQQLQDQQQQIAQFNSSVNS) are a coiled coil. Low complexity-rich tracts occupy residues 152 to 249 (VNSP…ANNT) and 277 to 294 (PRSI…TNSP). Positions 286–546 (PNLSPTNSPI…ATQVTPPGDL (261 aa)) form a DNA-binding region, NDT80. Residues 311–328 (ENENSDPPSPMTQYNENP) are compositionally biased toward polar residues. 2 stretches are compositionally biased toward low complexity: residues 615–660 (NHNN…NNNN) and 680–721 (NINN…NNNN). In terms of domain architecture, Peptidase S74 spans 767-877 (SDLRIKYDLK…KQMDEMKLKL (111 aa)). Residues 863–895 (TQELSKQMDEMKLKLITYESKLKNLKKKSKNQT) adopt a coiled-coil conformation. The helical transmembrane segment at 895 to 915 (TILLIIFMITFLLVALYMYKP) threads the bilayer.

Its subcellular location is the membrane. In terms of biological role, transcription factor which acts as a key regulator of pstA (prestalk-A) cells differentiation. Essential for ecmA-specific gene expression. The chain is Myelin gene regulatory factor-like A (mrfA) from Dictyostelium discoideum (Social amoeba).